Reading from the N-terminus, the 486-residue chain is NADH-quinone oxidoreductase subunit N (486 aa).

The next 14 helical transmembrane spans lie at 8-28 (LIAL…ILSI), 36-56 (FIAF…YFLI), 74-94 (ILYI…AYPW), 104-124 (EFYL…ISNH), 125-145 (MASL…LIAY), 160-180 (LVLS…IYAI), 204-224 (VLFG…MVPF), 239-259 (VLSF…LYFF), 270-290 (IFLI…LMAI), 298-318 (FFGY…LVSK), 329-349 (GIFL…INLF), 374-394 (ASIV…LGFF), 407-427 (HLWT…YGYL), and 459-479 (ILIF…NPLI).

The protein belongs to the complex I subunit 2 family. As to quaternary structure, NDH-1 is composed of 13 different subunits. Subunits NuoA, H, J, K, L, M, N constitute the membrane sector of the complex.

The protein localises to the cell membrane. It catalyses the reaction a quinone + NADH + 5 H(+)(in) = a quinol + NAD(+) + 4 H(+)(out). In terms of biological role, NDH-1 shuttles electrons from NADH, via FMN and iron-sulfur (Fe-S) centers, to quinones in the respiratory chain. The immediate electron acceptor for the enzyme in this species is believed to be ubiquinone. Couples the redox reaction to proton translocation (for every two electrons transferred, four hydrogen ions are translocated across the cytoplasmic membrane), and thus conserves the redox energy in a proton gradient. The chain is NADH-quinone oxidoreductase subunit N from Buchnera aphidicola subsp. Schizaphis graminum (strain Sg).